An 80-amino-acid polypeptide reads, in one-letter code: Clavaspirin (80 aa).

The signal sequence occupies residues Met1 to Ala17. A propeptide spanning residues Lys18 to Lys29 is cleaved from the precursor. Leu52 is subject to Leucine amide. A propeptide spanning residues Gly53–Gln80 is cleaved from the precursor.

As to expression, pharyngeal tissues and hemocytes.

It localises to the secreted. Its function is as follows. Exhibits broad-spectrum antimicrobial activity against both Gram-positive and Gram-negative bacteria. Has potent hemolytic activity. This Styela clava (Sea squirt) protein is Clavaspirin.